Here is a 417-residue protein sequence, read N- to C-terminus: Serine hydroxymethyltransferase 2 (417 aa).

(6S)-5,6,7,8-tetrahydrofolate contacts are provided by residues leucine 121 and 125–127; that span reads GHL. Position 229 is an N6-(pyridoxal phosphate)lysine (lysine 229). 354–356 is a (6S)-5,6,7,8-tetrahydrofolate binding site; sequence SPF.

It belongs to the SHMT family. In terms of assembly, homodimer. Pyridoxal 5'-phosphate serves as cofactor.

It localises to the cytoplasm. The catalysed reaction is (6R)-5,10-methylene-5,6,7,8-tetrahydrofolate + glycine + H2O = (6S)-5,6,7,8-tetrahydrofolate + L-serine. It participates in one-carbon metabolism; tetrahydrofolate interconversion. The protein operates within amino-acid biosynthesis; glycine biosynthesis; glycine from L-serine: step 1/1. Catalyzes the reversible interconversion of serine and glycine with tetrahydrofolate (THF) serving as the one-carbon carrier. This reaction serves as the major source of one-carbon groups required for the biosynthesis of purines, thymidylate, methionine, and other important biomolecules. Also exhibits THF-independent aldolase activity toward beta-hydroxyamino acids, producing glycine and aldehydes, via a retro-aldol mechanism. The sequence is that of Serine hydroxymethyltransferase 2 from Pseudomonas putida (strain ATCC 47054 / DSM 6125 / CFBP 8728 / NCIMB 11950 / KT2440).